A 1104-amino-acid chain; its full sequence is Carbamoyl phosphate synthase large chain (1104 aa).

The carboxyphosphate synthetic domain stretch occupies residues 1 to 403; the sequence is MPRRQDIQKI…SFQKALRSLE (403 aa). Residues Arg129, Arg170, Gly176, Gly177, Gln209, Leu211, Glu216, Gly242, Ile243, His244, Gln286, and Glu300 each contribute to the ATP site. An ATP-grasp 1 domain is found at 133–329; that stretch reads NEAMDKIGVK…IAKMAAKLAV (197 aa). Mg(2+) is bound by residues Gln286, Glu300, and Asn302. Residues Gln286, Glu300, and Asn302 each contribute to the Mn(2+) site. The tract at residues 404–552 is oligomerization domain; the sequence is TGRAGWGCDK…YSTYEEETEV (149 aa). Residues 553-966 form a carbamoyl phosphate synthetic domain region; sequence IPASKPKVMI…AFAKAELGAG (414 aa). The 198-residue stretch at 703-900 folds into the ATP-grasp 2 domain; sequence EKILQKLNIS…LAKLASLIMS (198 aa). ATP-binding residues include Arg739, Lys778, Leu780, Glu785, Gly811, Ile812, His813, Ser814, Gln854, and Glu871. Residues Gln854, Glu871, and Asn873 each contribute to the Mg(2+) site. The Mn(2+) site is built by Gln854, Glu871, and Asn873. Residues 967-1104 form the MGS-like domain; it reads ERLPLTGTVF…KTIQEYCPNF (138 aa). The segment at 967–1104 is allosteric domain; that stretch reads ERLPLTGTVF…KTIQEYCPNF (138 aa).

The protein belongs to the CarB family. As to quaternary structure, composed of two chains; the small (or glutamine) chain promotes the hydrolysis of glutamine to ammonia, which is used by the large (or ammonia) chain to synthesize carbamoyl phosphate. Tetramer of heterodimers (alpha,beta)4. Mg(2+) is required as a cofactor. The cofactor is Mn(2+).

It catalyses the reaction hydrogencarbonate + L-glutamine + 2 ATP + H2O = carbamoyl phosphate + L-glutamate + 2 ADP + phosphate + 2 H(+). It carries out the reaction hydrogencarbonate + NH4(+) + 2 ATP = carbamoyl phosphate + 2 ADP + phosphate + 2 H(+). Its pathway is amino-acid biosynthesis; L-arginine biosynthesis; carbamoyl phosphate from bicarbonate: step 1/1. It participates in pyrimidine metabolism; UMP biosynthesis via de novo pathway; (S)-dihydroorotate from bicarbonate: step 1/3. Large subunit of the glutamine-dependent carbamoyl phosphate synthetase (CPSase). CPSase catalyzes the formation of carbamoyl phosphate from the ammonia moiety of glutamine, carbonate, and phosphate donated by ATP, constituting the first step of 2 biosynthetic pathways, one leading to arginine and/or urea and the other to pyrimidine nucleotides. The large subunit (synthetase) binds the substrates ammonia (free or transferred from glutamine from the small subunit), hydrogencarbonate and ATP and carries out an ATP-coupled ligase reaction, activating hydrogencarbonate by forming carboxy phosphate which reacts with ammonia to form carbamoyl phosphate. This is Carbamoyl phosphate synthase large chain from Nostoc sp. (strain PCC 7120 / SAG 25.82 / UTEX 2576).